The chain runs to 361 residues: Free fatty acid receptor 4 (361 aa).

Residues 1 to 45 (MSPECARAAGDAPLRSLEQANRTRFPFFSDVKGDHRLVLAAVETT) are Extracellular-facing. N-linked (GlcNAc...) asparagine glycosylation is present at asparagine 21. The chain crosses the membrane as a helical span at residues 46-66 (VLVLIFAVSLLGNVCALVLVA). Residues 67 to 77 (RRRRRGATACL) lie on the Cytoplasmic side of the membrane. A helical membrane pass occupies residues 78–98 (VLNLFCADLLFISAIPLVLAV). Over 99-112 (RWTEAWLLGPVACH) the chain is Extracellular. A disulfide bond links cysteine 111 and cysteine 194. A helical transmembrane segment spans residues 113–133 (LLFYVMTLSGSVTILTLAAVS). Over 134 to 156 (LERMVCIVHLQRGVRGPGRRARA) the chain is Cytoplasmic. Residues 157–177 (VLLALIWGYSAVAALPLCVFF) traverse the membrane as a helical segment. Residues 178-204 (RVVPQRLPGADQEISICTLIWPTIPGE) lie on the Extracellular side of the membrane. Residues 205–225 (ISWDVSFVTLNFLVPGLVIVI) form a helical membrane-spanning segment. Topologically, residues 226–268 (SYSKILQITKASRKRLTVSLAYSESHQIRVSQQDFRLFRTLFL) are cytoplasmic. The helical transmembrane segment at 269–289 (LMVSFFIMWSPIIITILLILI) threads the bilayer. The Extracellular portion of the chain corresponds to 290–295 (QNFKQD). The chain crosses the membrane as a helical span at residues 296–316 (LVIWPSLFFWVVAFTFANSAL). Residues 317 to 361 (NPILYNMTLCRNEWKKIFCCFWFPEKGAILTDTSVKRNDLSIISG) are Cytoplasmic-facing. A phosphothreonine mark is found at threonine 347 and threonine 349. Serine 350, serine 357, and serine 360 each carry phosphoserine.

This sequence belongs to the G-protein coupled receptor 1 family. Interacts (via C-terminus) with ARRB2 following LCFAs stimulation. Phosphorylated at two clusters of Ser and Thr residues located in the intracellular C-terminus, a prerequisite for FFAR4 internalization via an ARRB2-dependent pathway. In terms of tissue distribution, the predominant isoform in human tissues. Expressed in adipose tissue, pancreatic islets, lung and brain. Expressed in alpha cells of pancreatic islets. Expressed in primary cilia of perivascular preadipocytes of white adipose tissue (at protein level). Abundant expression in the intestinal tract. Expressed in colonic intraepithelial neuroendocrine cells.

The protein localises to the cell membrane. Its subcellular location is the endosome membrane. It localises to the lysosome membrane. The protein resides in the cell projection. It is found in the cilium membrane. Its function is as follows. G-protein-coupled receptor for long-chain fatty acids (LCFAs) with a major role in adipogenesis, energy metabolism and inflammation. Signals via G-protein and beta-arrestin pathways. LCFAs sensing initiates activation of phosphoinositidase C-linked G proteins GNAQ and GNA11 (G(q)/G(11)), inducing a variety of cellular responses via second messenger pathways such as intracellular calcium mobilization, modulation of cyclic adenosine monophosphate (cAMP) production, and mitogen-activated protein kinases (MAPKs). After LCFAs binding, associates with beta-arrestin ARRB2 that acts as an adapter protein coupling the receptor to specific downstream signaling pathways, as well as mediating receptor endocytosis. In response to dietary fats, plays an important role in the regulation of adipocyte proliferation and differentiation. Acts as a receptor for omega-3 polyunsaturated fatty acids (PUFAs) at primary cilium of perivascular preadipocytes, initiating an adipogenic program via cAMP and CTCF-dependent chromatin remodeling that ultimately results in transcriptional activation of adipogenic genes and cell cycle entry. Induces differentiation of brown adipocytes probably via autocrine and endocrine functions of FGF21 hormone. Activates brown adipocytes by initiating intracellular calcium signaling that leads to mitochondrial depolarization and fission, and overall increased mitochondrial respiration. Consequently stimulates fatty acid uptake and oxidation in mitochondria together with UCP1-mediated thermogenic respiration, eventually reducing fat mass. Regulates bi-potential differentiation of bone marrow mesenchymal stem cells toward osteoblasts or adipocytes likely by up-regulating distinct integrins. In response to dietary fats regulates hormone secretion and appetite. Stimulates GIP and GLP1 secretion from enteroendocrine cells as well as GCG secretion in pancreatic alpha cells, thereby playing a role in the regulation of blood glucose levels. Negatively regulates glucose-induced SST secretion in pancreatic delta cells. Mediates LCFAs inhibition of GHRL secretion, an appetite-controlling hormone. In taste buds, contributes to sensing of dietary fatty acids by the gustatory system. During the inflammatory response, promotes anti-inflammatory M2 macrophage differentiation in adipose tissue. Mediates the anti-inflammatory effects of omega-3 PUFAs via inhibition of NLRP3 inflammasome activation. In this pathway, interacts with adapter protein ARRB2 and inhibits the priming step triggered by Toll-like receptors (TLRs) at the level of TAK1 and TAB1. Further inhibits the activation step when ARRB2 directly associates with NLRP3, leading to inhibition of pro-inflammatory cytokine release. Mediates LCFAs anti-apoptotic effects. Receptor for LCFAs decoupled from G-protein signaling. May signal through beta-arrestin pathway. After LCFAs binding, associates with beta-arrestin ARRB2 that may act as an adapter protein coupling the receptor to specific downstream signaling pathways, as well as mediating receptor endocytosis. This is Free fatty acid receptor 4 from Homo sapiens (Human).